The following is a 352-amino-acid chain: UDP-N-acetylglucosamine--N-acetylmuramyl-(pentapeptide) pyrophosphoryl-undecaprenol N-acetylglucosamine transferase (352 aa).

The UDP-N-acetyl-alpha-D-glucosamine site is built by Ser-195 and Gln-287.

The protein belongs to the glycosyltransferase 28 family. MurG subfamily.

The protein localises to the cell membrane. The catalysed reaction is Mur2Ac(oyl-L-Ala-gamma-D-Glu-L-Lys-D-Ala-D-Ala)-di-trans,octa-cis-undecaprenyl diphosphate + UDP-N-acetyl-alpha-D-glucosamine = beta-D-GlcNAc-(1-&gt;4)-Mur2Ac(oyl-L-Ala-gamma-D-Glu-L-Lys-D-Ala-D-Ala)-di-trans,octa-cis-undecaprenyl diphosphate + UDP + H(+). Its pathway is cell wall biogenesis; peptidoglycan biosynthesis. In terms of biological role, cell wall formation. Catalyzes the transfer of a GlcNAc subunit on undecaprenyl-pyrophosphoryl-MurNAc-pentapeptide (lipid intermediate I) to form undecaprenyl-pyrophosphoryl-MurNAc-(pentapeptide)GlcNAc (lipid intermediate II). This is UDP-N-acetylglucosamine--N-acetylmuramyl-(pentapeptide) pyrophosphoryl-undecaprenol N-acetylglucosamine transferase from Streptococcus pneumoniae (strain ATCC BAA-255 / R6).